Here is a 252-residue protein sequence, read N- to C-terminus: 14-3-3 protein 10 (252 aa).

This sequence belongs to the 14-3-3 family. Homodimer.

This Solanum lycopersicum (Tomato) protein is 14-3-3 protein 10 (TFT10).